The sequence spans 115 residues: Macrophage migration inhibitory factor (115 aa).

The Proton acceptor; via imino nitrogen role is filled by P2. Residues K33 and I65 each contribute to the substrate site. At K78 the chain carries N6-acetyllysine; alternate. K78 carries the N6-succinyllysine; alternate modification. N98 is a binding site for substrate.

Belongs to the MIF family. As to quaternary structure, homotrimer. Interacts with CXCR2 extracellular domain. Interacts with the CD74 extracellular domain, USO1, COPS5 and BNIPL. As to expression, expressed in a wide variety of organs including brain, spleen, liver, muscle and kidney.

Its subcellular location is the secreted. The protein resides in the cytoplasm. It carries out the reaction 3-phenylpyruvate = enol-phenylpyruvate. The enzyme catalyses L-dopachrome = 5,6-dihydroxyindole-2-carboxylate. In terms of biological role, pro-inflammatory cytokine involved in the innate immune response to bacterial pathogens. The expression of MIF at sites of inflammation suggests a role as mediator in regulating the function of macrophages in host defense. Counteracts the anti-inflammatory activity of glucocorticoids. Has phenylpyruvate tautomerase and dopachrome tautomerase activity (in vitro), but the physiological substrate is not known. It is not clear whether the tautomerase activity has any physiological relevance, and whether it is important for cytokine activity. This Rattus norvegicus (Rat) protein is Macrophage migration inhibitory factor (Mif).